We begin with the raw amino-acid sequence, 217 residues long: PRELI domain-containing protein 1, mitochondrial (217 aa).

The PRELI/MSF1 domain maps to 36–174 (TEDIVHREVT…ILAKLQGEAP (139 aa)).

Forms a complex with TRIAP1 in the mitochondrion intermembrane space. Interacts with OPA1 and AIFM1. As to expression, abundantly expressed in all tissues tested except testis with highest levels in thymus.

It is found in the mitochondrion. The protein resides in the mitochondrion intermembrane space. The enzyme catalyses a 1,2-diacyl-sn-glycero-3-phosphate(in) = a 1,2-diacyl-sn-glycero-3-phosphate(out). In terms of biological role, involved in the modulation of the mitochondrial apoptotic pathway by ensuring the accumulation of cardiolipin (CL) in mitochondrial membranes. In vitro, the TRIAP1:PRELID1 complex mediates the transfer of phosphatidic acid (PA) between liposomes and probably functions as a PA transporter across the mitochondrion intermembrane space to provide PA for CL synthesis in the inner membrane. Regulates the mitochondrial apoptotic pathway in primary Th cells. Regulates Th cell differentiation by down-regulating STAT6 thereby reducing IL-4-induced Th2 cell number. May be important for the development of vital and immunocompetent organs. This is PRELI domain-containing protein 1, mitochondrial (Prelid1) from Mus musculus (Mouse).